Here is a 192-residue protein sequence, read N- to C-terminus: Imidazole glycerol phosphate synthase subunit HisH (192 aa).

Residues 1–192 (MIAIIDYGLG…QALKGGFIND (192 aa)) form the Glutamine amidotransferase type-1 domain. The active-site Nucleophile is the cysteine 77. Catalysis depends on residues histidine 169 and glutamate 171.

In terms of assembly, heterodimer of HisH and HisF.

It is found in the cytoplasm. The catalysed reaction is 5-[(5-phospho-1-deoxy-D-ribulos-1-ylimino)methylamino]-1-(5-phospho-beta-D-ribosyl)imidazole-4-carboxamide + L-glutamine = D-erythro-1-(imidazol-4-yl)glycerol 3-phosphate + 5-amino-1-(5-phospho-beta-D-ribosyl)imidazole-4-carboxamide + L-glutamate + H(+). It catalyses the reaction L-glutamine + H2O = L-glutamate + NH4(+). The protein operates within amino-acid biosynthesis; L-histidine biosynthesis; L-histidine from 5-phospho-alpha-D-ribose 1-diphosphate: step 5/9. In terms of biological role, IGPS catalyzes the conversion of PRFAR and glutamine to IGP, AICAR and glutamate. The HisH subunit catalyzes the hydrolysis of glutamine to glutamate and ammonia as part of the synthesis of IGP and AICAR. The resulting ammonia molecule is channeled to the active site of HisF. The chain is Imidazole glycerol phosphate synthase subunit HisH from Staphylococcus epidermidis (strain ATCC 12228 / FDA PCI 1200).